Here is a 462-residue protein sequence, read N- to C-terminus: ATP synthase subunit beta (462 aa).

Glycine 151–threonine 158 serves as a coordination point for ATP.

Belongs to the ATPase alpha/beta chains family. F-type ATPases have 2 components, CF(1) - the catalytic core - and CF(0) - the membrane proton channel. CF(1) has five subunits: alpha(3), beta(3), gamma(1), delta(1), epsilon(1). CF(0) has three main subunits: a(1), b(2) and c(9-12). The alpha and beta chains form an alternating ring which encloses part of the gamma chain. CF(1) is attached to CF(0) by a central stalk formed by the gamma and epsilon chains, while a peripheral stalk is formed by the delta and b chains.

It localises to the cell inner membrane. It carries out the reaction ATP + H2O + 4 H(+)(in) = ADP + phosphate + 5 H(+)(out). In terms of biological role, produces ATP from ADP in the presence of a proton gradient across the membrane. The catalytic sites are hosted primarily by the beta subunits. The protein is ATP synthase subunit beta of Chlorobium limicola.